A 528-amino-acid polypeptide reads, in one-letter code: Abrin-d (528 aa).

The residue at position 1 (glutamine 1) is a Pyrrolidone carboxylic acid. Glutamate 164 is an active-site residue. Asparagine 200 is a glycosylation site (N-linked (GlcNAc...) asparagine). 3 cysteine pairs are disulfide-bonded: cysteine 247–cysteine 269, cysteine 286–cysteine 305, and cysteine 329–cysteine 346. The Ricin B-type lectin 1 domain occupies tyrosine 273 to glycine 400. The 1-alpha repeat unit spans residues aspartate 283–serine 325. Residues asparagine 326 to asparagine 366 form a 1-beta repeat. N-linked (GlcNAc...) asparagine glycans are attached at residues asparagine 361 and asparagine 401. One copy of the 1-gamma repeat lies at serine 369–asparagine 401. Residues threonine 403 to leucine 527 form the Ricin B-type lectin 2 domain. The stretch at serine 414–serine 449 is one 2-alpha repeat. 2 disulfide bridges follow: cysteine 417/cysteine 430 and cysteine 456/cysteine 473. Residues threonine 453 to serine 492 form a 2-beta repeat. The stretch at aspartate 495–phenylalanine 528 is one 2-gamma repeat.

The protein in the N-terminal section; belongs to the ribosome-inactivating protein family. Type 2 RIP subfamily. As to quaternary structure, disulfide-linked dimer of A and B chains.

It catalyses the reaction Endohydrolysis of the N-glycosidic bond at one specific adenosine on the 28S rRNA.. Its function is as follows. The A chain is responsible for inhibiting protein synthesis through the catalytic inactivation of 60S ribosomal subunits by removing adenine from position 4,324 of 28S rRNA. In terms of biological role, the B chain is a galactose-specific lectin that facilitates the binding of abrin to the cell membrane that precedes endocytosis. The polypeptide is Abrin-d (Abrus precatorius (Indian licorice)).